The sequence spans 280 residues: Threonylcarbamoyl-AMP synthase (280 aa).

A mitochondrion-targeting transit peptide spans 1 to 56; it reads MSTARPCAGLRAAVAAGMGLSDGPAGSSRGCRLLRPPAPAPALPGARLLRLPESEA. Ser61 carries the post-translational modification Phosphoserine. Positions 68–258 constitute a YrdC-like domain; sequence TEALRAAVAE…KFGIIRSGCA (191 aa).

The protein belongs to the SUA5 family. Interacts with RSC1A1.

The protein resides in the cytoplasm. It is found in the mitochondrion. The protein localises to the cell membrane. The catalysed reaction is L-threonine + hydrogencarbonate + ATP = L-threonylcarbamoyladenylate + diphosphate + H2O. Functionally, cytoplasmic and mitochondrial threonylcarbamoyl-AMP synthase required for the formation of a threonylcarbamoyl group on adenosine at position 37 (t(6)A37) in tRNAs that read codons beginning with adenine. Catalyzes the conversion of L-threonine, HCO(3)(-)/CO(2) and ATP to give threonylcarbamoyl-AMP (TC-AMP) as the acyladenylate intermediate, with the release of diphosphate. Participates in t(6)A37 formation in cytoplasmic and mitochondrial tRNAs. May regulate the activity of some transporters. This chain is Threonylcarbamoyl-AMP synthase, found in Rattus norvegicus (Rat).